The primary structure comprises 1132 residues: Mis18-binding protein 1 (1132 aa).

Residue Lys-7 forms a Glycyl lysine isopeptide (Lys-Gly) (interchain with G-Cter in SUMO2) linkage. Ser-9 carries the post-translational modification Phosphoserine. Lys-65 participates in a covalent cross-link: Glycyl lysine isopeptide (Lys-Gly) (interchain with G-Cter in SUMO2). 5 positions are modified to phosphoserine: Ser-110, Ser-131, Ser-135, Ser-172, and Ser-192. The disordered stretch occupies residues 123–154 (LRDKQEQPSRNSSLLEPQKSGNNETFTPNRVE). Residues 130-150 (PSRNSSLLEPQKSGNNETFTP) are compositionally biased toward polar residues. Residues Lys-211 and Lys-262 each participate in a glycyl lysine isopeptide (Lys-Gly) (interchain with G-Cter in SUMO2) cross-link. Ser-299 is modified (phosphoserine). Residues 306–332 (SERTTEGTSQQKVKEGNGKTVPGETGL) form a disordered region. Ser-365 carries the post-translational modification Phosphoserine. Residues 383 to 469 (VQLQEWMIKS…MFGFPENWKE (87 aa)) enclose the SANTA domain. A disordered region spans residues 482 to 518 (EKNREKTKQKQKTGRSVRDIRKSMKNDARENQTDTAQ). Residues 497–513 (SVRDIRKSMKNDARENQ) are compositionally biased toward basic and acidic residues. Residues Lys-534, Lys-612, Lys-639, and Lys-647 each participate in a glycyl lysine isopeptide (Lys-Gly) (interchain with G-Cter in SUMO2) cross-link. A Phosphothreonine modification is found at Thr-653. Residues Lys-727 and Lys-742 each participate in a glycyl lysine isopeptide (Lys-Gly) (interchain with G-Cter in SUMO2) cross-link. Positions 765-798 (HQSSPDLSSEESETEKEIKRKAEVKKTKAGNTKE) are disordered. Phosphoserine occurs at positions 772 and 773. Positions 779–790 (EKEIKRKAEVKK) are enriched in basic and acidic residues. Thr-821 is modified (phosphothreonine). The residue at position 824 (Ser-824) is a Phosphoserine. Residue Lys-840 forms a Glycyl lysine isopeptide (Lys-Gly) (interchain with G-Cter in SUMO2) linkage. Residue Ser-860 is modified to Phosphoserine. The SANT domain occupies 875–930 (IQDKEWNEKELQKLHCAFASLPKHKPGFWSEVAAAVGSRSPEECQRKYMENPRGKG). A Glycyl lysine isopeptide (Lys-Gly) (interchain with G-Cter in SUMO2) cross-link involves residue Lys-899. A disordered region spans residues 923–957 (MENPRGKGSQKHVTKKKPANSKGQNGKRGDADQKQ). Positions 930-941 (GSQKHVTKKKPA) are enriched in basic residues. Residues Lys-956, Lys-964, and Lys-983 each participate in a glycyl lysine isopeptide (Lys-Gly) (interchain with G-Cter in SUMO2) cross-link. A Phosphoserine modification is found at Ser-1008. Lys-1079 participates in a covalent cross-link: Glycyl lysine isopeptide (Lys-Gly) (interchain with G-Cter in SUMO2). Ser-1086 bears the Phosphoserine mark. A phosphothreonine mark is found at Thr-1087 and Thr-1089. Residues Ser-1104 and Ser-1116 each carry the phosphoserine modification.

As to quaternary structure, interacts with SP1. Interacts with MIS18A. Identified in a complex containing MIS18A, OIP5/MIS18B, MIS18BP1, RBBP7 and RBBP4. Interacts with KAT7/HBO1. Interacts (via N-terminus) with FLNA (via N-terminus).

It is found in the nucleus. The protein resides in the chromosome. Its subcellular location is the centromere. Functionally, required for recruitment of CENPA to centromeres and normal chromosome segregation during mitosis. The polypeptide is Mis18-binding protein 1 (MIS18BP1) (Homo sapiens (Human)).